The following is a 128-amino-acid chain: Disintegrin ocellatusin (128 aa).

The N-terminal stretch at 1 to 20 (MIPVLLVTICLAVFPFQGSS) is a signal peptide. A propeptide spanning residues 21–65 (IILESGNINDYEIVYPKKVAVLPTGAMNSAHPCYDPVTCQPKEKE) is cleaved from the precursor. A Disintegrin domain is found at 26–112 (GNINDYEIVY…DCPRNPYKGE (87 aa)). 5 cysteine pairs are disulfide-bonded: C53/C59, C67/C76, C72/C97, C73/C102, and C85/C104. A Cell attachment site motif is present at residues 89 to 91 (RGD). Positions 116-128 (MEWPAPAKGSVLM) are excised as a propeptide.

In terms of assembly, monomer. Expressed by the venom gland.

The protein localises to the secreted. The disintegrin ocellatusin-10c1 is a poor inhibitor of platelet aggregation. The disintegrin inhibits the adhesion of cells expressing the RGD-dependent integrin alpha-5/beta-1 (ITGA5/ITGB1) to immobilized fibronectin. Inhibition on alpha-2b/beta-3 (ITGA2B/ITGB3) is low, and there is no inhibition on alpha-1/beta-1 (ITGA1/ITGB1), alpha-2/beta-1 (ITGA2/ITGB1) and alpha-6/beta-1 (ITGA6/ITGB1). In terms of biological role, the short monomeric disintegrin ocellatusin inhibits ADP-induced platelet aggregation (IC(50)=168 nM). Inhibits alpha-5/beta-1 (ITGA5/ITGB1) integrin and induces the expression of a ligand-induced binding site epitope on beta-1 integrin subunit. Has a direct chemotactic stimulus on human neutrophils in vitro. This Echis ocellatus (Ocellated saw-scaled viper) protein is Disintegrin ocellatusin.